Reading from the N-terminus, the 481-residue chain is 3-isopropylmalate dehydratase large subunit (481 aa).

Residues C357, C417, and C420 each contribute to the [4Fe-4S] cluster site.

Belongs to the aconitase/IPM isomerase family. LeuC type 1 subfamily. Heterodimer of LeuC and LeuD. [4Fe-4S] cluster is required as a cofactor.

It catalyses the reaction (2R,3S)-3-isopropylmalate = (2S)-2-isopropylmalate. It participates in amino-acid biosynthesis; L-leucine biosynthesis; L-leucine from 3-methyl-2-oxobutanoate: step 2/4. Functionally, catalyzes the isomerization between 2-isopropylmalate and 3-isopropylmalate, via the formation of 2-isopropylmaleate. This chain is 3-isopropylmalate dehydratase large subunit, found in Mycolicibacterium vanbaalenii (strain DSM 7251 / JCM 13017 / BCRC 16820 / KCTC 9966 / NRRL B-24157 / PYR-1) (Mycobacterium vanbaalenii).